Consider the following 259-residue polypeptide: Ferritin-4, chloroplastic (259 aa).

The transit peptide at Met1–Ser57 directs the protein to the chloroplast. The interval Thr58 to Arg90 is extension peptide (EP). Positions Gln91–Gly244 constitute a Ferritin-like diiron domain. Fe cation is bound by residues Glu108, Glu143, His146, Glu192, and Gln226.

It belongs to the ferritin family. As to quaternary structure, oligomer of 24 subunits. There are two types of subunits: L (light) chain and H (heavy) chain. The major chain can be light or heavy, depending on the species and tissue type. The functional molecule forms a roughly spherical shell with a diameter of 12 nm and contains a central cavity into which the insoluble mineral iron core is deposited.

The protein resides in the plastid. It localises to the chloroplast. The catalysed reaction is 4 Fe(2+) + O2 + 4 H(+) = 4 Fe(3+) + 2 H2O. Stores iron in a soluble, non-toxic, readily available form. Important for iron homeostasis. Has ferroxidase activity. Iron is taken up in the ferrous form and deposited as ferric hydroxides after oxidation. This Arabidopsis thaliana (Mouse-ear cress) protein is Ferritin-4, chloroplastic (FER4).